The chain runs to 276 residues: Putative E3 ubiquitin-protein ligase SINA-like 9 (276 aa).

Residues 38–74 (CPICCEALTSPIFQCDNGHLACGSCCPKLSNKCPACT) form an RING-type zinc finger. The interval 88-274 (VLESILIPCP…MQVFIIENVD (187 aa)) is SBD. The segment at 91-149 (SILIPCPNVRFGCTKSFFYGKESAHEKECIFSQCSCPSSVCDYTGSYKDLYAHYKLTHS) adopts an SIAH-type zinc-finger fold. The Zn(2+) site is built by cysteine 96, cysteine 103, histidine 115, cysteine 119, cysteine 126, cysteine 131, histidine 143, and histidine 148.

The protein belongs to the SINA (Seven in absentia) family.

The enzyme catalyses S-ubiquitinyl-[E2 ubiquitin-conjugating enzyme]-L-cysteine + [acceptor protein]-L-lysine = [E2 ubiquitin-conjugating enzyme]-L-cysteine + N(6)-ubiquitinyl-[acceptor protein]-L-lysine.. It functions in the pathway protein modification; protein ubiquitination. Its function is as follows. E3 ubiquitin-protein ligase that mediates ubiquitination and subsequent proteasomal degradation of target proteins. E3 ubiquitin ligases accept ubiquitin from an E2 ubiquitin-conjugating enzyme in the form of a thioester and then directly transfers the ubiquitin to targeted substrates. It probably triggers the ubiquitin-mediated degradation of different substrates. The chain is Putative E3 ubiquitin-protein ligase SINA-like 9 from Arabidopsis thaliana (Mouse-ear cress).